We begin with the raw amino-acid sequence, 239 residues long: RNA-binding protein 38 (239 aa).

In terms of domain architecture, RRM spans 34 to 111 (TKIFVGGLPY…RKANVNLAYL (78 aa)).

Belongs to the RBM38 family.

Its subcellular location is the cytoplasm. It localises to the cytosol. The protein resides in the nucleus. Its function is as follows. RNA-binding protein that specifically bind the 3'-UTR of CDKN1A transcripts, leading to maintain the stability of CDKN1A transcripts, thereby acting as a mediator of the p53/TP53 family to regulate CDKN1A. CDKN1A is a cyclin-dependent kinase inhibitor transcriptionally regulated by the p53/TP53 family to induce cell cycle arrest. Isoform 1, but not isoform 2, has the ability to induce cell cycle arrest in G1 and maintain the stability of CDKN1A transcripts induced by p53/TP53. Also acts as a mRNA splicing factor. Specifically regulates the expression of FGFR2-IIIb, an epithelial cell-specific isoform of FGFR2. Plays a role in myogenic differentiation. Functionally, (Microbial infection) Essential factor for the splicing of the pre-mRNAs of human parvovirus B19 (B19V) and for the expression of B19V 11-kDa protein, which enhances viral replication. This is RNA-binding protein 38 (RBM38) from Homo sapiens (Human).